The chain runs to 632 residues: Chaperone protein HtpG (632 aa).

Residues 1 to 339 (MAHETMSFQA…SADLPLNVSR (339 aa)) form an a; substrate-binding region. The tract at residues 340–559 (EILQESRDVK…DNDMSGYLQR (220 aa)) is b. Residues 560 to 632 (MLKAAGQNAP…TNALLLSRAA (73 aa)) are c.

It belongs to the heat shock protein 90 family. As to quaternary structure, homodimer.

Its subcellular location is the cytoplasm. Molecular chaperone. Has ATPase activity. This chain is Chaperone protein HtpG, found in Burkholderia ambifaria (strain ATCC BAA-244 / DSM 16087 / CCUG 44356 / LMG 19182 / AMMD) (Burkholderia cepacia (strain AMMD)).